The primary structure comprises 345 residues: S-adenosylmethionine:tRNA ribosyltransferase-isomerase (345 aa).

Belongs to the QueA family. In terms of assembly, monomer.

The protein localises to the cytoplasm. The enzyme catalyses 7-aminomethyl-7-carbaguanosine(34) in tRNA + S-adenosyl-L-methionine = epoxyqueuosine(34) in tRNA + adenine + L-methionine + 2 H(+). It participates in tRNA modification; tRNA-queuosine biosynthesis. Functionally, transfers and isomerizes the ribose moiety from AdoMet to the 7-aminomethyl group of 7-deazaguanine (preQ1-tRNA) to give epoxyqueuosine (oQ-tRNA). This Shewanella oneidensis (strain ATCC 700550 / JCM 31522 / CIP 106686 / LMG 19005 / NCIMB 14063 / MR-1) protein is S-adenosylmethionine:tRNA ribosyltransferase-isomerase.